The sequence spans 106 residues: Iron-sulfur cluster assembly protein CyaY (106 aa).

The protein belongs to the frataxin family.

Its function is as follows. Involved in iron-sulfur (Fe-S) cluster assembly. May act as a regulator of Fe-S biogenesis. This chain is Iron-sulfur cluster assembly protein CyaY, found in Cronobacter sakazakii (strain ATCC BAA-894) (Enterobacter sakazakii).